The chain runs to 341 residues: Methionine import ATP-binding protein MetN 1 (341 aa).

In terms of domain architecture, ABC transporter spans 2 to 241 (IEFRQVSKSF…PKTTIAQNFV (240 aa)). 38–45 (GYSGAGKS) serves as a coordination point for ATP.

This sequence belongs to the ABC transporter superfamily. Methionine importer (TC 3.A.1.24) family. In terms of assembly, the complex is composed of two ATP-binding proteins (MetN), two transmembrane proteins (MetI) and a solute-binding protein (MetQ).

The protein localises to the cell membrane. The catalysed reaction is L-methionine(out) + ATP + H2O = L-methionine(in) + ADP + phosphate + H(+). It catalyses the reaction D-methionine(out) + ATP + H2O = D-methionine(in) + ADP + phosphate + H(+). Part of the ABC transporter complex MetNIQ involved in methionine import. Responsible for energy coupling to the transport system. In Staphylococcus aureus (strain MRSA252), this protein is Methionine import ATP-binding protein MetN 1.